The following is a 243-amino-acid chain: Voltage-gated monoatomic cation channel TMEM109 (243 aa).

The first 33 residues, 1-33 (MAGSGSSAPWGKHLLHAVLMVLVALVLLHSALA), serve as a signal peptide directing secretion. Over 34-83 (QSHRDFAPPGQQRREAPVDLLTQIGRSVRETLDTWIGPETMHLISETLSQ) the chain is Lumenal. The helical transmembrane segment at 84-104 (VMWAISSAISVAFFALSGIAA) threads the bilayer. Topologically, residues 105–135 (QLLTALGLDGDHLTQGLKLSPSQVQTFLLWG) are cytoplasmic. Residues 136–156 (AGALVVYWLLSLLLGLVLAVL) form a helical membrane-spanning segment. The Lumenal portion of the chain corresponds to 157–185 (GRILGGLKLVIFLAGFVALVRSVPDPSTR). Residues 186 to 205 (ALLLLALLTLYALLSRLTGS) traverse the membrane as a helical segment. Residues 206–243 (RASGAQLEAKVRGLERQVDELRWRQRRAAKGARSVEEE) are Cytoplasmic-facing.

As to quaternary structure, homooligomer. Interacts with CRYAB; in the cellular response to DNA damage. In terms of processing, the N-terminus is blocked. In terms of tissue distribution, widely expressed. Expressed in skeletal, cardiac and smooth muscle cells, in brain, including neuroglial cells, cerebral cortex neurons and cerebellum, but not Purkinje cells. Also detected in Paneth and Goblet cells of the small intestine (but not in the epithelium), duodenal gland, pancreas, parotid gland, testis, thyroid gland and adrenal gland, as well as in epidermis, choroid plexus, ductus epididymidis, lymphocytes, fibroblasts, endothelial cells and seminiferous epithelial cells (at protein level). Not detected in mucous cells of the duodenal gland, in hepatocytes nor in uriniferous tubules.

It is found in the nucleus outer membrane. Its subcellular location is the endoplasmic reticulum membrane. The protein resides in the sarcoplasmic reticulum membrane. It catalyses the reaction K(+)(in) = K(+)(out). The enzyme catalyses Ca(2+)(in) = Ca(2+)(out). Functions as a voltage-gated monoatomic cation channel permeable to both potassium and calcium. Plays a role in the cellular response to DNA damage. The sequence is that of Voltage-gated monoatomic cation channel TMEM109 from Oryctolagus cuniculus (Rabbit).